A 69-amino-acid polypeptide reads, in one-letter code: Guanine nucleotide-binding protein G(I)/G(S)/G(O) subunit gamma-T2 (69 aa).

The residue at position 66 (cysteine 66) is a Cysteine methyl ester. The S-farnesyl cysteine moiety is linked to residue cysteine 66. The propeptide at 67–69 (IIS) is removed in mature form.

The protein belongs to the G protein gamma family. As to quaternary structure, g proteins are composed of 3 units, alpha, beta and gamma.

It localises to the cell membrane. Its function is as follows. Guanine nucleotide-binding proteins (G proteins) are involved as a modulator or transducer in various transmembrane signaling systems. The beta and gamma chains are required for the GTPase activity, for replacement of GDP by GTP, and for G protein-effector interaction. In Bos taurus (Bovine), this protein is Guanine nucleotide-binding protein G(I)/G(S)/G(O) subunit gamma-T2 (GNGT2).